We begin with the raw amino-acid sequence, 479 residues long: Poly(A) polymerase catalytic subunit (479 aa).

Residues D202 and D204 contribute to the active site. Residues D202, D204, and D253 each coordinate Ca(2+).

The protein belongs to the poxviridae poly(A) polymerase catalytic subunit family. In terms of assembly, heterodimer of a large (catalytic) subunit and a small (regulatory) subunit.

It carries out the reaction RNA(n) + ATP = RNA(n)-3'-adenine ribonucleotide + diphosphate. In terms of biological role, polymerase that creates the 3'-poly(A) tail of mRNA's. The protein is Poly(A) polymerase catalytic subunit (OPG063) of Cynomys gunnisoni (Gunnison's prairie dog).